The sequence spans 256 residues: Floral homeotic protein APETALA 1 (256 aa).

One can recognise an MADS-box domain in the interval 1 to 61 (MGRGRVQLKR…GKLFEYSTDS (61 aa)). A K-box domain is found at 88 to 178 (NTNWSMEYNR…FKQIKEREKI (91 aa)).

Homodimer capable of binding to CArG-box sequences.

Its subcellular location is the nucleus. Functionally, transcription factor that promotes early floral meristem identity in synergy with LEAFY. Displays a redundant function with CAULIFLOWER in the up-regulation of LEAFY. Required subsequently for the transition of an inflorescence meristem into a floral meristem, and for the normal development of sepals and petals in flowers. Regulates positively B class homeotic proteins. The chain is Floral homeotic protein APETALA 1 (AP1) from Citrus sinensis (Sweet orange).